The primary structure comprises 338 residues: Ketol-acid reductoisomerase (NADP(+)) (338 aa).

In terms of domain architecture, KARI N-terminal Rossmann spans 1–181; sequence MKVYYDKDAD…GGTKGGVIET (181 aa). NADP(+) is bound by residues 24-27, R47, and S52; that span reads YGSQ. H107 is an active-site residue. Position 133 (G133) interacts with NADP(+). The KARI C-terminal knotted domain occupies 182 to 327; that stretch reads NFKEETETDL…GQLRDMMPWI (146 aa). Positions 190, 194, 226, and 230 each coordinate Mg(2+). Position 251 (S251) interacts with substrate.

This sequence belongs to the ketol-acid reductoisomerase family. Mg(2+) is required as a cofactor.

The catalysed reaction is (2R)-2,3-dihydroxy-3-methylbutanoate + NADP(+) = (2S)-2-acetolactate + NADPH + H(+). It carries out the reaction (2R,3R)-2,3-dihydroxy-3-methylpentanoate + NADP(+) = (S)-2-ethyl-2-hydroxy-3-oxobutanoate + NADPH + H(+). It participates in amino-acid biosynthesis; L-isoleucine biosynthesis; L-isoleucine from 2-oxobutanoate: step 2/4. It functions in the pathway amino-acid biosynthesis; L-valine biosynthesis; L-valine from pyruvate: step 2/4. Its function is as follows. Involved in the biosynthesis of branched-chain amino acids (BCAA). Catalyzes an alkyl-migration followed by a ketol-acid reduction of (S)-2-acetolactate (S2AL) to yield (R)-2,3-dihydroxy-isovalerate. In the isomerase reaction, S2AL is rearranged via a Mg-dependent methyl migration to produce 3-hydroxy-3-methyl-2-ketobutyrate (HMKB). In the reductase reaction, this 2-ketoacid undergoes a metal-dependent reduction by NADPH to yield (R)-2,3-dihydroxy-isovalerate. The polypeptide is Ketol-acid reductoisomerase (NADP(+)) (Azoarcus sp. (strain BH72)).